The primary structure comprises 791 residues: Protein CLASP-2 (791 aa).

3 stretches are compositionally biased toward low complexity: residues 259-271 (ASDA…SVNS), 323-334 (RTPNTRPMTTRT), and 372-381 (SQPGSRNGSP). Disordered stretches follow at residues 259 to 283 (ASDA…SKLS), 315 to 391 (TRMT…TGTL), and 422 to 454 (AMNT…PQKS). Over residues 422-434 (AMNTAKESLGQPS) the composition is skewed to polar residues.

It belongs to the CLASP family. Interacts with hcp-1 and hcp-2.

The protein localises to the cytoplasm. It localises to the cytoskeleton. It is found in the microtubule organizing center. Its subcellular location is the centrosome. The protein resides in the chromosome. The protein localises to the centromere. It localises to the kinetochore. It is found in the spindle. Probable microtubule plus-end tracking protein that promotes the stabilization of dynamic microtubules. Required for the formation of mitotic and meiotic spindles. Specifically promotes the polymerization of kinetochore-bound microtubules. Also required for cytoplasmic streaming. The polypeptide is Protein CLASP-2 (cls-2) (Caenorhabditis briggsae).